The following is a 354-amino-acid chain: Serine/threonine-protein kinase-transforming protein mos (354 aa).

The region spanning 74–350 (VCLMHRLGSG…LLQRDLKAFR (277 aa)) is the Protein kinase domain. ATP-binding positions include 80 to 88 (LGSGGFGSV) and Lys101. Catalysis depends on Asp209, which acts as the Proton acceptor.

Belongs to the protein kinase superfamily. Ser/Thr protein kinase family.

The catalysed reaction is L-seryl-[protein] + ATP = O-phospho-L-seryl-[protein] + ADP + H(+). It carries out the reaction L-threonyl-[protein] + ATP = O-phospho-L-threonyl-[protein] + ADP + H(+). The protein is Serine/threonine-protein kinase-transforming protein mos (V-MOS) of Moloney murine sarcoma virus (strain ts110) (MoMSV).